A 440-amino-acid polypeptide reads, in one-letter code: WAS/WASL-interacting protein family member 2 (440 aa).

Over residues 1–18 (MPIPPPPPPPPGPPPPPT) the composition is skewed to pro residues. Residues 1 to 38 (MPIPPPPPPPPGPPPPPTFNQANTEQPKLSRDEQRNRG) form a disordered region. The 18-residue stretch at 36–53 (NRGALLQDICKGTKLKKV) folds into the WH2 domain. Arginine 37 carries the post-translational modification Asymmetric dimethylarginine. A binds actin region spans residues 49-52 (KLKK). 2 disordered regions span residues 56–386 (VNDR…RDSI) and 419–440 (RVYPSKTNRAARGAPPLPPILR). Positions 116 to 132 (PSSRAAAPRPPGSAASG) are enriched in low complexity. Composition is skewed to pro residues over residues 176–193 (APPPPPPGRRANAPPTPL), 225–236 (PAPPPVKPPPSP), 249–262 (APPPPPYRQPPGVP), and 356–378 (RGKPPPPPSRTPAGPPPPPPPPL).

Belongs to the verprolin family. In terms of assembly, interacts with WASL and WASP, and this interaction results in cytoplasmic relocation of these two proteins along actin filaments. Interacts with NCK2 resulting in the localization to sites of focal adhesions.

It is found in the cytoplasm. It localises to the cytoskeleton. Plays an active role in the formation of cell surface protrusions downstream of activated PDGFB receptors. Plays an important role in actin-microspike formation through cooperation with WASL. May cooperate with WASP and WASL to induce mobilization and reorganization of the actin filament system. The sequence is that of WAS/WASL-interacting protein family member 2 (Wipf2) from Mus musculus (Mouse).